We begin with the raw amino-acid sequence, 565 residues long: Arginine--tRNA ligase (565 aa).

Positions 128–138 (ANPTGPLHVGH) match the 'HIGH' region motif.

It belongs to the class-I aminoacyl-tRNA synthetase family. In terms of assembly, monomer.

The protein resides in the cytoplasm. The catalysed reaction is tRNA(Arg) + L-arginine + ATP = L-arginyl-tRNA(Arg) + AMP + diphosphate. This Delftia acidovorans (strain DSM 14801 / SPH-1) protein is Arginine--tRNA ligase.